The primary structure comprises 492 residues: Anthranilate synthase component 1 (492 aa).

Residues S48 and 273–275 (PYM) each bind L-tryptophan. 308-309 (GT) is a binding site for chorismate. E335 is a Mg(2+) binding site. Residues Y423, R443, 457 to 459 (GGG), and G459 each bind chorismate. E472 provides a ligand contact to Mg(2+).

Belongs to the anthranilate synthase component I family. In terms of assembly, heterotetramer consisting of two non-identical subunits: a beta subunit (TrpG) and a large alpha subunit (TrpE). Requires Mg(2+) as cofactor.

The catalysed reaction is chorismate + L-glutamine = anthranilate + pyruvate + L-glutamate + H(+). The protein operates within amino-acid biosynthesis; L-tryptophan biosynthesis; L-tryptophan from chorismate: step 1/5. Its activity is regulated as follows. Feedback inhibited by tryptophan. Functionally, part of a heterotetrameric complex that catalyzes the two-step biosynthesis of anthranilate, an intermediate in the biosynthesis of L-tryptophan. In the first step, the glutamine-binding beta subunit (TrpG) of anthranilate synthase (AS) provides the glutamine amidotransferase activity which generates ammonia as a substrate that, along with chorismate, is used in the second step, catalyzed by the large alpha subunit of AS (TrpE) to produce anthranilate. In the absence of TrpG, TrpE can synthesize anthranilate directly from chorismate and high concentrations of ammonia. The polypeptide is Anthranilate synthase component 1 (Pseudomonas aeruginosa (strain ATCC 15692 / DSM 22644 / CIP 104116 / JCM 14847 / LMG 12228 / 1C / PRS 101 / PAO1)).